A 352-amino-acid chain; its full sequence is Glycerol-3-phosphate dehydrogenase [NAD(P)+] (352 aa).

Trp-11, Arg-37, and Lys-112 together coordinate NADPH. 3 residues coordinate sn-glycerol 3-phosphate: Lys-112, Gly-153, and Ser-155. Ala-157 lines the NADPH pocket. Sn-glycerol 3-phosphate is bound by residues Lys-208, Asp-261, Ser-271, Arg-272, and Asn-273. Catalysis depends on Lys-208, which acts as the Proton acceptor. Position 272 (Arg-272) interacts with NADPH. 2 residues coordinate NADPH: Val-296 and Glu-298.

It belongs to the NAD-dependent glycerol-3-phosphate dehydrogenase family.

The protein resides in the cytoplasm. It catalyses the reaction sn-glycerol 3-phosphate + NAD(+) = dihydroxyacetone phosphate + NADH + H(+). The catalysed reaction is sn-glycerol 3-phosphate + NADP(+) = dihydroxyacetone phosphate + NADPH + H(+). The protein operates within membrane lipid metabolism; glycerophospholipid metabolism. Its function is as follows. Catalyzes the reduction of the glycolytic intermediate dihydroxyacetone phosphate (DHAP) to sn-glycerol 3-phosphate (G3P), the key precursor for phospholipid synthesis. This chain is Glycerol-3-phosphate dehydrogenase [NAD(P)+], found in Polaromonas naphthalenivorans (strain CJ2).